The primary structure comprises 410 residues: Arginine deiminase (410 aa).

C400 (amidino-cysteine intermediate) is an active-site residue.

Belongs to the arginine deiminase family.

The protein resides in the cytoplasm. The catalysed reaction is L-arginine + H2O = L-citrulline + NH4(+). It participates in amino-acid degradation; L-arginine degradation via ADI pathway; carbamoyl phosphate from L-arginine: step 1/2. In Lactococcus lactis subsp. lactis (strain IL1403) (Streptococcus lactis), this protein is Arginine deiminase (arcA).